We begin with the raw amino-acid sequence, 618 residues long: Neurosecretory protein VGF (618 aa).

Residues Met-1–Ala-23 form the signal peptide. 3 disordered regions span residues Ala-23 to Gly-46, Val-86 to Pro-201, and Pro-219 to Leu-262. Residues Pro-26–Ser-37 show a composition bias toward pro residues. Over residues Glu-180–Arg-195 the composition is skewed to low complexity. A coiled-coil region spans residues Leu-301 to Leu-332. Gln-310 is modified (pyrrolidone carboxylic acid). The interval Arg-342–Gln-603 is disordered. Over residues Gly-356–Arg-378 the composition is skewed to basic and acidic residues. Positions Val-379 to Glu-395 are enriched in acidic residues. Over residues Ala-416–Glu-434 the composition is skewed to basic and acidic residues. Position 421 is a phosphoserine (Ser-421). Position 425 is a phosphothreonine (Thr-425). Residues Gly-435–Asp-451 show a composition bias toward acidic residues. The span at Pro-490–Ala-500 shows a compositional bias: pro residues. Residues His-578–Glu-602 are compositionally biased toward basic and acidic residues.

Multiple peptides are derived from VGF, with activities in synaptic plasticity, antidepression, penile erection, autonomic activation, and increases in energy expenditure.

The protein resides in the secreted. It localises to the cytoplasmic vesicle. Its subcellular location is the secretory vesicle. In terms of biological role, secreted polyprotein that is packaged and proteolytically processed by prohormone convertases PCSK1 and PCSK2 in a cell-type-specific manner. VGF and peptides derived from its processing play many roles in neurogenesis and neuroplasticity associated with learning, memory, depression and chronic pain. Plays a role in the control of body fluid homeostasis by regulating vasopressin release. Suppresses presynaptic glutamatergic neurons connected to vasopressin neurons. Its function is as follows. Plays a role in the control of body fluid homeostasis by regulating vasopressin release. Activates GABAergic interneurons which are inhibitory neurons of the nervous system and thereby suppresses presynaptic glutamatergic neurons. Also stimulates feeding behavior in an orexin-dependent manner in the hypothalamus. Functions as a positive regulator for the activation of orexin neurons resulting in elevated gastric acid secretion and gastric emptying. This chain is Neurosecretory protein VGF, found in Bos taurus (Bovine).